The sequence spans 268 residues: Putative sgc region protein SgcQ (268 aa).

This sequence belongs to the BtpA family.

This Escherichia coli (strain K12) protein is Putative sgc region protein SgcQ (sgcQ).